The chain runs to 1435 residues: Probable ATP-dependent DNA helicase HFM1 (1435 aa).

The Helicase ATP-binding domain maps to 290-478; that stretch reads DDLLYTDRNF…WLSDGERPAV (189 aa). 303 to 310 contacts ATP; that stretch reads APTGSGKT. The DEAH box signature appears at 411–414; that stretch reads DEVH. The Helicase C-terminal domain maps to 519–720; sequence SVIQMYSDQK…DVNIAVEWIR (202 aa). Residues 777–1092 enclose the SEC63 domain; it reads PTEAGRLMAW…GLDIQQKLTV (316 aa). The segment at 1109–1139 is disordered; that stretch reads KSETQISHSKHSDISTIAGPNKGTTASKKPG. The segment at 1143-1158 adopts a C4-type zinc-finger fold; sequence CNHLCKSKHTCGHDCC. Residues 1295 to 1315 form a disordered region; sequence GFGNTLSSSTRGSKLPLQESK. Over residues 1296-1306 the composition is skewed to polar residues; it reads FGNTLSSSTRG.

The protein belongs to the helicase family. SKI2 subfamily. It depends on Zn(2+) as a cofactor. As to expression, preferentially expressed in testis and ovary.

It catalyses the reaction Couples ATP hydrolysis with the unwinding of duplex DNA by translocating in the 3'-5' direction.. It carries out the reaction ATP + H2O = ADP + phosphate + H(+). Required for crossover formation and complete synapsis of homologous chromosomes during meiosis. The polypeptide is Probable ATP-dependent DNA helicase HFM1 (HFM1) (Homo sapiens (Human)).